The following is a 481-amino-acid chain: Ribulose bisphosphate carboxylase large chain (481 aa).

Residues 1–2 constitute a propeptide that is removed on maturation; that stretch reads MS. Residue P3 is modified to N-acetylproline. K14 is subject to N6,N6,N6-trimethyllysine. The substrate site is built by N123 and T173. The active-site Proton acceptor is the K175. K177 serves as a coordination point for substrate. Positions 201, 203, and 204 each coordinate Mg(2+). At K201 the chain carries N6-carboxylysine. The active-site Proton acceptor is H294. 3 residues coordinate substrate: R295, H327, and S379.

Belongs to the RuBisCO large chain family. Type I subfamily. Heterohexadecamer of 8 large chains and 8 small chains; disulfide-linked. The disulfide link is formed within the large subunit homodimers. The cofactor is Mg(2+). In terms of processing, the disulfide bond which can form in the large chain dimeric partners within the hexadecamer appears to be associated with oxidative stress and protein turnover.

Its subcellular location is the plastid. The enzyme catalyses 2 (2R)-3-phosphoglycerate + 2 H(+) = D-ribulose 1,5-bisphosphate + CO2 + H2O. It catalyses the reaction D-ribulose 1,5-bisphosphate + O2 = 2-phosphoglycolate + (2R)-3-phosphoglycerate + 2 H(+). In terms of biological role, ruBisCO catalyzes two reactions: the carboxylation of D-ribulose 1,5-bisphosphate, the primary event in carbon dioxide fixation, as well as the oxidative fragmentation of the pentose substrate in the photorespiration process. Both reactions occur simultaneously and in competition at the same active site. This chain is Ribulose bisphosphate carboxylase large chain, found in Cuscuta sandwichiana (Kauna'oa).